The primary structure comprises 131 residues: Small ribosomal subunit protein uS8 (131 aa).

Belongs to the universal ribosomal protein uS8 family. In terms of assembly, part of the 30S ribosomal subunit. Contacts proteins S5 and S12.

One of the primary rRNA binding proteins, it binds directly to 16S rRNA central domain where it helps coordinate assembly of the platform of the 30S subunit. This Dictyoglomus turgidum (strain DSM 6724 / Z-1310) protein is Small ribosomal subunit protein uS8.